The chain runs to 374 residues: Very late expression factor 1 (374 aa).

The Tyr recombinase domain occupies 169-349 (AIDTILNFID…NFDESSSDEE (181 aa)). Active-site residues include arginine 210, lysine 239, arginine 303, and histidine 326. Residues 328 to 374 (SPASTKPYLNKYNFDESSSDEESGGNNRDSSTGSSANSSSLYYQTGD) form a disordered region. Residue tyrosine 335 is the O-(3'-phospho-DNA)-tyrosine intermediate of the active site. The span at 357-367 (SSTGSSANSSS) shows a compositional bias: low complexity.

The protein belongs to the 'phage' integrase family.

Its function is as follows. Involved in very late gene activation. This Orgyia pseudotsugata (Douglas-fir tussock moth) protein is Very late expression factor 1 (VLF-1).